The primary structure comprises 325 residues: 33 kDa chaperonin (325 aa).

2 cysteine pairs are disulfide-bonded: Cys260/Cys262 and Cys293/Cys296.

The protein belongs to the HSP33 family. Post-translationally, under oxidizing conditions two disulfide bonds are formed involving the reactive cysteines. Under reducing conditions zinc is bound to the reactive cysteines and the protein is inactive.

Its subcellular location is the cytoplasm. Redox regulated molecular chaperone. Protects both thermally unfolding and oxidatively damaged proteins from irreversible aggregation. Plays an important role in the bacterial defense system toward oxidative stress. In Aquifex aeolicus (strain VF5), this protein is 33 kDa chaperonin.